A 472-amino-acid chain; its full sequence is Sarcalumenin (472 aa).

Positions M1 to A19 are cleaved as a signal peptide. The 242-residue stretch at I89–A330 folds into the Dynamin-type G domain. Positions G99–S106 are G1 motif. A glycan (N-linked (GlcNAc...) asparagine) is linked at S102. Positions E127–P128 are G2 motif. Positions D189–G192 are G3 motif. The tract at residues N254 to D257 is G4 motif. Residue P277 is a region of interest, G5 motif. Residues N280 and N388 are each glycosylated (N-linked (GlcNAc...) asparagine).

It belongs to the TRAFAC class dynamin-like GTPase superfamily. Dynamin/Fzo/YdjA family. In terms of processing, N-glycosylated. Detected in skeletal muscle.

The protein localises to the sarcoplasmic reticulum lumen. Its subcellular location is the sarcoplasmic reticulum membrane. This chain is Sarcalumenin (SRL), found in Oryctolagus cuniculus (Rabbit).